A 285-amino-acid polypeptide reads, in one-letter code: NADPH-dependent 7-cyano-7-deazaguanine reductase (285 aa).

80 to 82 contributes to the substrate binding site; sequence VES. 82–83 provides a ligand contact to NADPH; the sequence is SK. Catalysis depends on C191, which acts as the Thioimide intermediate. D198 (proton donor) is an active-site residue. 231–232 provides a ligand contact to substrate; sequence HE. An NADPH-binding site is contributed by 260–261; it reads RG.

This sequence belongs to the GTP cyclohydrolase I family. QueF type 2 subfamily. As to quaternary structure, homodimer.

The protein resides in the cytoplasm. It catalyses the reaction 7-aminomethyl-7-carbaguanine + 2 NADP(+) = 7-cyano-7-deazaguanine + 2 NADPH + 3 H(+). It functions in the pathway tRNA modification; tRNA-queuosine biosynthesis. Catalyzes the NADPH-dependent reduction of 7-cyano-7-deazaguanine (preQ0) to 7-aminomethyl-7-deazaguanine (preQ1). The sequence is that of NADPH-dependent 7-cyano-7-deazaguanine reductase from Psychrobacter cryohalolentis (strain ATCC BAA-1226 / DSM 17306 / VKM B-2378 / K5).